We begin with the raw amino-acid sequence, 395 residues long: MKGISKILSASIALMKLENVYSATALCSNAYGLTPGQQGMAQQPSYVLIPSTPGTIANCASGSQDTYSPSPAAPTSPVTPGKTSENETSPSAPAEDVGTCKIAVLKHCDAPGTTSGTTPGSGPCETPEQQQPLSVISTTPAVPVTVESAQSPSVVPVVPVVAHHQAVPGYYNNGTSGIPGQQQILSGTLPPGATLCQGQAMPSTPGQQQILSGTLPPGVTLCQGQATPSTPGQQQVLSGTLPPGVTLCQGQATPSTPGQQQVLSGTLLPGATLCQDQGMPGTSGVPGQQGQSSGQCCAPQIPNPVMPPSMNISGNGYPSSTAYSPNLGSLGSCVDIQKTGGTSCEQKPEKSATQYAMEACATPTPTVIIGNSEYLVGPGMYNAINSPCNTAVQCC.

A signal peptide spans 1–22 (MKGISKILSASIALMKLENVYS). Disordered stretches follow at residues 59 to 95 (CASG…APAE) and 111 to 133 (PGTT…QQPL). The segment covering 68–80 (SPSPAAPTSPVTP) has biased composition (low complexity). The span at 81 to 91 (GKTSENETSPS) shows a compositional bias: polar residues. An N-linked (GlcNAc...) asparagine glycan is attached at Asn-86. The span at 111–128 (PGTTSGTTPGSGPCETPE) shows a compositional bias: low complexity. Residue Asn-173 is glycosylated (N-linked (GlcNAc...) asparagine). 4 consecutive repeat copies span residues 179-204 (PGQQ…MPST), 205-230 (PGQQ…TPST), 231-256 (PGQQ…TPST), and 257-282 (PGQQ…MPGT). Positions 179-282 (PGQQQILSGT…LCQDQGMPGT (104 aa)) are 4 X 26 AA approximate tandem repeats. The interval 277 to 300 (QGMPGTSGVPGQQGQSSGQCCAPQ) is disordered. The segment covering 280-300 (PGTSGVPGQQGQSSGQCCAPQ) has biased composition (low complexity). N-linked (GlcNAc...) asparagine glycosylation is present at Asn-311.

In terms of assembly, interacts with PTP2 and PTP3.

It localises to the spore polar tube. Functionally, involved with PTP2 and PTP3 in the formation of the polar tube through which the infectious agent is passed on to the host cell. Accounts for at least 70 percent of the mass of the polar tube. This Encephalitozoon cuniculi (strain GB-M1) (Microsporidian parasite) protein is Polar tube protein 1 (PTP1).